The primary structure comprises 400 residues: Chorismate synthase (400 aa).

R40 and R46 together coordinate NADP(+). FMN contacts are provided by residues 135–137 (RAS), 257–258 (QA), G301, 316–320 (KPIST), and R342.

Belongs to the chorismate synthase family. Homotetramer. FMNH2 serves as cofactor.

It catalyses the reaction 5-O-(1-carboxyvinyl)-3-phosphoshikimate = chorismate + phosphate. Its pathway is metabolic intermediate biosynthesis; chorismate biosynthesis; chorismate from D-erythrose 4-phosphate and phosphoenolpyruvate: step 7/7. In terms of biological role, catalyzes the anti-1,4-elimination of the C-3 phosphate and the C-6 proR hydrogen from 5-enolpyruvylshikimate-3-phosphate (EPSP) to yield chorismate, which is the branch point compound that serves as the starting substrate for the three terminal pathways of aromatic amino acid biosynthesis. This reaction introduces a second double bond into the aromatic ring system. The sequence is that of Chorismate synthase from Tropheryma whipplei (strain TW08/27) (Whipple's bacillus).